Reading from the N-terminus, the 880-residue chain is Alanine--tRNA ligase (880 aa).

Zn(2+)-binding residues include His567, His571, Cys669, and His673.

The protein belongs to the class-II aminoacyl-tRNA synthetase family. Requires Zn(2+) as cofactor.

The protein resides in the cytoplasm. The catalysed reaction is tRNA(Ala) + L-alanine + ATP = L-alanyl-tRNA(Ala) + AMP + diphosphate. Functionally, catalyzes the attachment of alanine to tRNA(Ala) in a two-step reaction: alanine is first activated by ATP to form Ala-AMP and then transferred to the acceptor end of tRNA(Ala). Also edits incorrectly charged Ser-tRNA(Ala) and Gly-tRNA(Ala) via its editing domain. The sequence is that of Alanine--tRNA ligase from Bacillus cereus (strain ATCC 14579 / DSM 31 / CCUG 7414 / JCM 2152 / NBRC 15305 / NCIMB 9373 / NCTC 2599 / NRRL B-3711).